A 317-amino-acid polypeptide reads, in one-letter code: 1D-myo-inositol 2-acetamido-2-deoxy-alpha-D-glucopyranoside deacetylase (317 aa).

H15, D18, and H154 together coordinate Zn(2+). The interval 289–317 (QDLDNRNPNSQPPADQAREDHLLTGLGFA) is disordered.

The protein belongs to the MshB deacetylase family. Requires Zn(2+) as cofactor.

It carries out the reaction 1D-myo-inositol 2-acetamido-2-deoxy-alpha-D-glucopyranoside + H2O = 1D-myo-inositol 2-amino-2-deoxy-alpha-D-glucopyranoside + acetate. Catalyzes the deacetylation of 1D-myo-inositol 2-acetamido-2-deoxy-alpha-D-glucopyranoside (GlcNAc-Ins) in the mycothiol biosynthesis pathway. The sequence is that of 1D-myo-inositol 2-acetamido-2-deoxy-alpha-D-glucopyranoside deacetylase from Segniliparus rotundus (strain ATCC BAA-972 / CDC 1076 / CIP 108378 / DSM 44985 / JCM 13578).